Consider the following 527-residue polypeptide: Matrix metalloproteinase-19 (527 aa).

Positions 1 to 18 (MDWQQLWLAFLLPMTVSG) are cleaved as a signal peptide. Residues 19–98 (RALGPTEKEA…EDPFNQKSLK (80 aa)) constitute a propeptide that is removed on maturation. The Cysteine switch motif lies at 84–91 (PRCGLEDP). Cys86 is a Zn(2+) binding site. An N-linked (GlcNAc...) asparagine glycan is attached at Asn109. His213 is a binding site for Zn(2+). Glu214 is a catalytic residue. His217 and His223 together coordinate Zn(2+). 4 Hemopexin repeats span residues 286–333 (PNPC…WEGL), 334–372 (PGNLDAAVYSPRTRRTHFFKGNKVWRYVDFKMSPGFPMK), 377–425 (EPNL…FTGV), and 426–471 (PDRP…WMHC). An intrachain disulfide couples Cys289 to Cys471. N-linked (GlcNAc...) asparagine glycosylation is found at Asn464 and Asn479. Residues 473 to 500 (SQTPDTNSSTGDVTPSTTDTVLGTTPST) form a disordered region. Residue Asp512 is the site of GPI-anchor amidated aspartate attachment. Positions 513 to 527 (SASLSFSANVTLLGA) are cleaved as a propeptide — removed in mature form. Asn521 is a glycosylation site (N-linked (GlcNAc...) asparagine).

The protein belongs to the peptidase M10A family. Zn(2+) is required as a cofactor. It depends on Ca(2+) as a cofactor. Activated by autolytic cleavage after Lys-98. In terms of processing, tyrosine phosphorylated by PKDCC/VLK. In terms of tissue distribution, highly expressed in the liver. Expressed in the arterial tunica media of large blood vessels.

Its subcellular location is the cell membrane. It localises to the secreted. It is found in the extracellular space. The protein resides in the extracellular matrix. In terms of biological role, endopeptidase that degrades various components of the extracellular matrix, such as aggrecan and cartilage oligomeric matrix protein (comp), during development, haemostasis and pathological conditions (arthritic disease). May also play a role in neovascularization or angiogenesis. Hydrolyzes collagen type IV, laminin, nidogen, nascin-C isoform, fibronectin, and type I gelatin. This chain is Matrix metalloproteinase-19 (Mmp19), found in Mus musculus (Mouse).